The sequence spans 233 residues: Lipoprotein-releasing system ATP-binding protein LolD (233 aa).

The ABC transporter domain occupies 6 to 233 (LQCDNLCKRY…TAELSLMGAE (228 aa)). An ATP-binding site is contributed by 42 to 49 (GSSGSGKS).

It belongs to the ABC transporter superfamily. Lipoprotein translocase (TC 3.A.1.125) family. The complex is composed of two ATP-binding proteins (LolD) and two transmembrane proteins (LolC and LolE).

It localises to the cell inner membrane. Its function is as follows. Part of the ABC transporter complex LolCDE involved in the translocation of mature outer membrane-directed lipoproteins, from the inner membrane to the periplasmic chaperone, LolA. Responsible for the formation of the LolA-lipoprotein complex in an ATP-dependent manner. The chain is Lipoprotein-releasing system ATP-binding protein LolD from Salmonella paratyphi A (strain ATCC 9150 / SARB42).